We begin with the raw amino-acid sequence, 167 residues long: Peptide deformylase (167 aa).

2 residues coordinate Fe cation: cysteine 91 and histidine 133. The active site involves glutamate 134. Residue histidine 137 coordinates Fe cation.

This sequence belongs to the polypeptide deformylase family. Requires Fe(2+) as cofactor.

It catalyses the reaction N-terminal N-formyl-L-methionyl-[peptide] + H2O = N-terminal L-methionyl-[peptide] + formate. In terms of biological role, removes the formyl group from the N-terminal Met of newly synthesized proteins. Requires at least a dipeptide for an efficient rate of reaction. N-terminal L-methionine is a prerequisite for activity but the enzyme has broad specificity at other positions. This Tolumonas auensis (strain DSM 9187 / NBRC 110442 / TA 4) protein is Peptide deformylase.